The following is a 183-amino-acid chain: Capsid protein (183 aa).

The disordered stretch occupies residues 136–183; sequence NAPILSTLPETTVVRRRGRSPRRRTPSPRRRRSQSPRRRRSQSPASQC. Residues 149 to 176 show a composition bias toward basic residues; the sequence is VRRRGRSPRRRTPSPRRRRSQSPRRRRS. 3 positions are modified to phosphoserine; by host: S155, S162, and S170. One copy of the 1; half-length repeat lies at 155–161; that stretch reads SPRRRTP. The interval 155-177 is 3 X 8 AA repeats of S-P-R-R-R-[PR]-S-Q; sequence SPRRRTPSPRRRRSQSPRRRRSQ. The Bipartite nuclear localization signal motif lies at 158 to 175; it reads RRTPSPRRRRSQSPRRRR. 2 tandem repeats follow at residues 162–169 and 170–177. Positions 177-183 are RNA binding; sequence QSPASQC.

This sequence belongs to the orthohepadnavirus core antigen family. As to quaternary structure, homodimerizes, then multimerizes. Interacts with cytosol exposed regions of viral L glycoprotein present in the reticulum-to-Golgi compartment. Interacts with human FLNB. Phosphorylated form interacts with host importin alpha; this interaction depends on the exposure of the NLS, which itself depends upon genome maturation and/or phosphorylation of the capsid protein. Interacts with host NUP153. In terms of processing, phosphorylated by host SRPK1, SRPK2, and maybe protein kinase C or GAPDH. Phosphorylation is critical for pregenomic RNA packaging. Protein kinase C phosphorylation is stimulated by HBx protein and may play a role in transport of the viral genome to the nucleus at the late step during the viral replication cycle.

It is found in the virion. The protein localises to the host cytoplasm. In terms of biological role, self assembles to form an icosahedral capsid. Most capsids appear to be large particles with an icosahedral symmetry of T=4 and consist of 240 copies of capsid protein, though a fraction forms smaller T=3 particles consisting of 180 capsid proteins. Entering capsids are transported along microtubules to the nucleus. Phosphorylation of the capsid is thought to induce exposure of nuclear localization signal in the C-terminal portion of the capsid protein that allows binding to the nuclear pore complex via the importin (karyopherin-) alpha and beta. Capsids are imported in intact form through the nuclear pore into the nuclear basket, where it probably binds NUP153. Only capsids that contain the mature viral genome can release the viral DNA and capsid protein into the nucleoplasm. Immature capsids get stuck in the basket. Capsids encapsulate the pre-genomic RNA and the P protein. Pre-genomic RNA is reverse-transcribed into DNA while the capsid is still in the cytoplasm. The capsid can then either be directed to the nucleus, providing more genomes for transcription, or bud through the endoplasmic reticulum to provide new virions. The polypeptide is Capsid protein (Hylobatidae (gibbons)).